The following is a 443-amino-acid chain: ATP-dependent protease ATPase subunit HslU (443 aa).

ATP-binding positions include isoleucine 18, 60–65 (GVGKTE), aspartate 256, glutamate 321, and arginine 393.

Belongs to the ClpX chaperone family. HslU subfamily. A double ring-shaped homohexamer of HslV is capped on each side by a ring-shaped HslU homohexamer. The assembly of the HslU/HslV complex is dependent on binding of ATP.

The protein resides in the cytoplasm. Its function is as follows. ATPase subunit of a proteasome-like degradation complex; this subunit has chaperone activity. The binding of ATP and its subsequent hydrolysis by HslU are essential for unfolding of protein substrates subsequently hydrolyzed by HslV. HslU recognizes the N-terminal part of its protein substrates and unfolds these before they are guided to HslV for hydrolysis. This is ATP-dependent protease ATPase subunit HslU from Salmonella arizonae (strain ATCC BAA-731 / CDC346-86 / RSK2980).